Reading from the N-terminus, the 86-residue chain is Defensin-like protein 259 (86 aa).

A signal peptide spans 1–25; the sequence is MKNASLKLPLLIFILVITSNLGAEA. Cystine bridges form between cysteine 60-cysteine 76, cysteine 66-cysteine 83, and cysteine 70-cysteine 85.

Belongs to the DEFL family.

The protein resides in the secreted. This Arabidopsis thaliana (Mouse-ear cress) protein is Defensin-like protein 259.